A 429-amino-acid polypeptide reads, in one-letter code: MPAIVIVGAQWGDEGKGKATDLLGGRVDYVVKPNGGNNAGHTVVVGGEKYELKLLPAGILSPNAVPIIGNGCVVNLEALFQEIDGLEARGADTSKLRVSANAHLVAPYHQVLDKVTERFLGSRAIGTTGRGIGPAYMDKVARLGIRVQDVFDASILRQKVEGSLRQKNELLVKVYNRRDIEVDEIVDYFLSFAERLRPLVIDSTYVLNTALDEGKVVLMEGGQATFLDVDHGTYPFVTSSNPTAGGASVGSGIGPTRISRSIGIIKAYTTRVGAGPFPTELFDEMGMYLQKTGGEFGVNTGRPRRCGWYDAVLARHASRVNGFTDYFVTKLDVLTGIEQIPVCVAYDVDGVRHDEMPMTQTEFHHAKPIFEYFEGWTEDITGARTLEDLPENAKNYVLALEKLSGTRFSAIGVGPDRDQTIVVNDLIND.

GTP-binding positions include 12–18 (GDEGKGK) and 40–42 (GHT). Asp13 functions as the Proton acceptor in the catalytic mechanism. Asp13 and Gly40 together coordinate Mg(2+). Residues 13 to 16 (DEGK), 38 to 41 (NAGH), Thr128, Arg142, Gln223, Thr238, and Arg302 contribute to the IMP site. The Proton donor role is filled by His41. A substrate-binding site is contributed by 298-304 (VNTGRPR). Residues Arg304, 330-332 (KLD), and 412-414 (GVG) contribute to the GTP site.

Belongs to the adenylosuccinate synthetase family. As to quaternary structure, homodimer. Mg(2+) serves as cofactor.

Its subcellular location is the cytoplasm. The enzyme catalyses IMP + L-aspartate + GTP = N(6)-(1,2-dicarboxyethyl)-AMP + GDP + phosphate + 2 H(+). Its pathway is purine metabolism; AMP biosynthesis via de novo pathway; AMP from IMP: step 1/2. Its function is as follows. Plays an important role in the de novo pathway of purine nucleotide biosynthesis. Catalyzes the first committed step in the biosynthesis of AMP from IMP. The protein is Adenylosuccinate synthetase of Arthrobacter sp. (strain FB24).